Reading from the N-terminus, the 513-residue chain is Bone morphogenetic protein 6 (513 aa).

The signal sequence occupies residues 1 to 20 (MPGLGRRAQWLCWWWGLLCS). Positions 21 to 374 (CCGPPPLRPP…VSEVHVRTTR (354 aa)) are excised as a propeptide. Disordered regions lie at residues 38–66 (AAGG…SSGF), 89–131 (LPHR…RLKS), and 145–200 (ADND…ASPL). The span at 98-121 (GLQQPQPPALRQQEEQQQQQQLPR) shows a compositional bias: low complexity. The segment covering 158–172 (QQSWPHEAASSSQRR) has biased composition (polar residues). N-linked (GlcNAc...) asparagine glycans are attached at residues Asn-241, Asn-269, Asn-386, Asn-404, and Asn-454. Positions 373-398 (TRSASSRRRQQSRNRSTQSQDVARVS) are disordered. Cystine bridges form between Cys-412–Cys-478, Cys-441–Cys-510, and Cys-445–Cys-512.

It belongs to the TGF-beta family. Interacts with SOSTDC1. Interacts (when glycosylated) with type I receptor ACVR1; the interaction may induce HAMP expression. Interacts with type II receptor ACVR2B. Interacts with Hemojuvelin/HJV. Interacts with ERFE; the interaction inhibits BMP-induced transcription of HAMP. Interacts with BMPR1A/ALK3. Forms heterodimers with BMP2 in vitro; the heterodimer then binds to its receptor BMPR1A /ALK3 and may induce HAMP expression. Post-translationally, glycosylated at Asn-454. Glycosylation is crucial for recognition by the activin receptor type I/ACVR1.

The protein resides in the secreted. Its function is as follows. Growth factor of the TGF-beta superfamily that plays essential roles in many developmental processes including cartilage and bone formation. Also plays an important role in the regulation of HAMP/hepcidin expression and iron metabolism by acting as a ligand for hemojuvelin/HJV. Also acts to promote expression of HAMP, potentially via the interaction with its receptor BMPR1A/ALK3. Initiates the canonical BMP signaling cascade by associating with type I receptor ACVR1 and type II receptor ACVR2B. In turn, ACVR1 propagates signal by phosphorylating SMAD1/5/8 that travel to the nucleus and act as activators and repressors of transcription of target. Can also signal through non-canonical pathway such as TAZ-Hippo signaling cascade to modulate VEGF signaling by regulating VEGFR2 expression. The sequence is that of Bone morphogenetic protein 6 (BMP6) from Homo sapiens (Human).